Consider the following 136-residue polypeptide: General odorant-binding protein 57e (136 aa).

Residues 1–20 form the signal peptide; it reads MLDQLTLCLLLNFLCANVLA. Intrachain disulfides connect Cys28/Cys61, Cys57/Cys109, and Cys98/Cys118.

Belongs to the PBP/GOBP family.

Functionally, present in the aqueous fluid surrounding olfactory sensory dendrites and are thought to aid in the capture and transport of hydrophobic odorants into and through this fluid. The sequence is that of General odorant-binding protein 57e from Drosophila melanogaster (Fruit fly).